We begin with the raw amino-acid sequence, 674 residues long: Glutaminase kidney isoform, mitochondrial (674 aa).

The N-terminal 54 residues, 1 to 54, are a transit peptide targeting the mitochondrion; that stretch reads MMRLRGSAMLRELLLRPPAAVGAVLRRAQPLGTLCRRPRGGSRPTAGLVAAARL. Residues 56–123 are disordered; the sequence is PWWGGGGRAK…PGETDAFGNS (68 aa). Residues 58 to 71 show a composition bias toward gly residues; sequence WGGGGRAKGPGAGG. Residues 89-101 are compositionally biased toward low complexity; sequence PPQQQQQQQQQPG. 2 positions are modified to N6-succinyllysine: K135 and K169. S291 contacts substrate. K316 carries the post-translational modification N6-acetyllysine. The highly mobile activation loop stretch occupies residues 320-327; it reads GLRFNKLF. Substrate-binding residues include N340, E386, N393, Y419, Y471, and V489. ANK repeat units follow at residues 590–619 and 624–653; these read DSRT…VNPF and WNNT…QYTP. The segment at 652–674 is disordered; sequence TPQGDSDDGKGNQTVHKNLDGLL. Residue S657 is modified to Phosphoserine.

The protein belongs to the glutaminase family. Homotetramer, dimer of dimers. The tetramers can assemble into rod-like oligomers (in vitro), but the physiological significance of this is not clear. Interacts with RAF1 and MAP2K2. Interacts with ATCAY; the interaction is direct and may control GLS localization, negatively regulating its activity. Synthesized as a 74-kDa cytosolic precursor which is proteolytically processed by the mitochondrial-processing peptidase (MPP) via a 72-kDa intermediate to yield the mature mitochondrial 68- and 65-kDa subunits.

It is found in the mitochondrion. Its subcellular location is the cytoplasm. The protein resides in the cytosol. It localises to the mitochondrion matrix. It carries out the reaction L-glutamine + H2O = L-glutamate + NH4(+). With respect to regulation, isoform 1 and isoform 2 are activated by phosphate, due to increased affinity for glutamine. At phosphate concentrations above 10 mM, isoform 2 is more efficient than isoform 1. Functionally, catalyzes the first reaction in the primary pathway for the renal catabolism of glutamine. Plays a role in maintaining acid-base homeostasis. Regulates the levels of the neurotransmitter glutamate, the main excitatory neurotransmitter in the brain. The sequence is that of Glutaminase kidney isoform, mitochondrial (Gls) from Mus musculus (Mouse).